The sequence spans 541 residues: Glucose-6-phosphate isomerase (541 aa).

The Proton donor role is filled by glutamate 346. Residues histidine 377 and lysine 506 contribute to the active site.

This sequence belongs to the GPI family.

Its subcellular location is the cytoplasm. The enzyme catalyses alpha-D-glucose 6-phosphate = beta-D-fructose 6-phosphate. It functions in the pathway carbohydrate biosynthesis; gluconeogenesis. It participates in carbohydrate degradation; glycolysis; D-glyceraldehyde 3-phosphate and glycerone phosphate from D-glucose: step 2/4. Functionally, catalyzes the reversible isomerization of glucose-6-phosphate to fructose-6-phosphate. The protein is Glucose-6-phosphate isomerase of Rhizobium johnstonii (strain DSM 114642 / LMG 32736 / 3841) (Rhizobium leguminosarum bv. viciae).